The following is a 912-amino-acid chain: Intercellular adhesion molecule 5 (912 aa).

The N-terminal stretch at 1 to 29 (MPGPSPGLRALLGFWVALGLGILRLSAVA) is a signal peptide. Over 30–826 (QEPFWADLQP…RITVRVAGPW (797 aa)) the chain is Extracellular. Ig-like C2-type domains lie at 47 to 127 (GGSL…PLPP), 132 to 232 (GENF…RLLA), 239 to 324 (DSQS…LLTL), 332 to 395 (GKLV…NGSA), 403 to 481 (PRLD…VTLT), 486 to 561 (PALD…VAVT), 566 to 645 (PSFE…NPLG), 659 to 734 (PQMD…TVGV), and 738 to 819 (PVVA…RRIT). The N-linked (GlcNAc...) (high mannose) asparagine glycan is linked to Asn-53. Intrachain disulfides connect Cys-54–Cys-97 and Cys-58–Cys-101. The N-linked (GlcNAc...) asparagine glycan is linked to Asn-134. A disulfide bridge links Cys-139 with Cys-195. Phosphothreonine occurs at positions 179 and 181. N-linked (GlcNAc...) asparagine glycosylation is found at Asn-192 and Asn-211. Cys-246 and Cys-297 are disulfide-bonded. 3 N-linked (GlcNAc...) asparagine glycosylation sites follow: Asn-311, Asn-366, and Asn-392. A disulfide bond links Cys-339 and Cys-378. 3 disulfide bridges follow: Cys-410/Cys-465, Cys-493/Cys-546, and Cys-573/Cys-638. N-linked (GlcNAc...) asparagine glycosylation is found at Asn-576 and Asn-639. Residues Cys-666 and Cys-717 are joined by a disulfide bond. The tract at residues 678–708 (AAGPACARGRPSPRVRCSREGAPRPARPRVS) is disordered. 3 N-linked (GlcNAc...) asparagine glycosylation sites follow: Asn-756, Asn-787, and Asn-788. The cysteines at positions 761 and 806 are disulfide-linked. The helical transmembrane segment at 827–847 (LWIAVGGAVGGAVLLAAGAGL) threads the bilayer. Over 848–912 (AFYVQSTACK…EVFAIQLTSA (65 aa)) the chain is Cytoplasmic. Residues 880–902 (GGAGSGAEGGPEAEDSAESPAGG) are disordered.

The protein belongs to the immunoglobulin superfamily. ICAM family. Post-translationally, glycosylation at Asn-53 is critical for functional folding. In terms of tissue distribution, expressed on neurons in the most rostral segment of the mammalian brain, the telencephalon.

The protein resides in the membrane. Functionally, ICAM proteins are ligands for the leukocyte adhesion protein LFA-1 (integrin alpha-L/beta-2). This is Intercellular adhesion molecule 5 (ICAM5) from Oryctolagus cuniculus (Rabbit).